Reading from the N-terminus, the 72-residue chain is Translation initiation factor IF-1 (72 aa).

The region spanning 1–72 (MSKDDSIEFE…TKGRITYRMK (72 aa)) is the S1-like domain.

Belongs to the IF-1 family. Component of the 30S ribosomal translation pre-initiation complex which assembles on the 30S ribosome in the order IF-2 and IF-3, IF-1 and N-formylmethionyl-tRNA(fMet); mRNA recruitment can occur at any time during PIC assembly.

The protein resides in the cytoplasm. One of the essential components for the initiation of protein synthesis. Stabilizes the binding of IF-2 and IF-3 on the 30S subunit to which N-formylmethionyl-tRNA(fMet) subsequently binds. Helps modulate mRNA selection, yielding the 30S pre-initiation complex (PIC). Upon addition of the 50S ribosomal subunit IF-1, IF-2 and IF-3 are released leaving the mature 70S translation initiation complex. This Xanthomonas euvesicatoria pv. vesicatoria (strain 85-10) (Xanthomonas campestris pv. vesicatoria) protein is Translation initiation factor IF-1.